A 485-amino-acid polypeptide reads, in one-letter code: Bifunctional protein GlmU (485 aa).

Residues 1–241 (MSASDFSSAV…ARELAGVNDR (241 aa)) form a pyrophosphorylase region. Residues 13–16 (LAAG), K27, Q84, and 89–90 (GT) contribute to the UDP-N-acetyl-alpha-D-glucosamine site. D114 contributes to the Mg(2+) binding site. UDP-N-acetyl-alpha-D-glucosamine-binding residues include G151, E166, N181, and N239. Position 239 (N239) interacts with Mg(2+). Residues 242-262 (VQLAEAGAELNRRTVIAAMRG) are linker. Residues 263–485 (GATIVDPATT…AAQNVHNQEG (223 aa)) are N-acetyltransferase. Residues R344 and K362 each contribute to the UDP-N-acetyl-alpha-D-glucosamine site. The active-site Proton acceptor is H374. UDP-N-acetyl-alpha-D-glucosamine contacts are provided by Y377 and N388. Residues A391, 397–398 (NY), S416, and A434 each bind acetyl-CoA. The segment at 465–485 (RPGTAAAQAAEAAQNVHNQEG) is disordered. Low complexity predominate over residues 469 to 478 (AAAQAAEAAQ).

This sequence in the N-terminal section; belongs to the N-acetylglucosamine-1-phosphate uridyltransferase family. The protein in the C-terminal section; belongs to the transferase hexapeptide repeat family. As to quaternary structure, homotrimer. Mg(2+) is required as a cofactor.

Its subcellular location is the cytoplasm. The catalysed reaction is alpha-D-glucosamine 1-phosphate + acetyl-CoA = N-acetyl-alpha-D-glucosamine 1-phosphate + CoA + H(+). It carries out the reaction N-acetyl-alpha-D-glucosamine 1-phosphate + UTP + H(+) = UDP-N-acetyl-alpha-D-glucosamine + diphosphate. Its pathway is nucleotide-sugar biosynthesis; UDP-N-acetyl-alpha-D-glucosamine biosynthesis; N-acetyl-alpha-D-glucosamine 1-phosphate from alpha-D-glucosamine 6-phosphate (route II): step 2/2. It functions in the pathway nucleotide-sugar biosynthesis; UDP-N-acetyl-alpha-D-glucosamine biosynthesis; UDP-N-acetyl-alpha-D-glucosamine from N-acetyl-alpha-D-glucosamine 1-phosphate: step 1/1. The protein operates within bacterial outer membrane biogenesis; LPS lipid A biosynthesis. Its function is as follows. Catalyzes the last two sequential reactions in the de novo biosynthetic pathway for UDP-N-acetylglucosamine (UDP-GlcNAc). The C-terminal domain catalyzes the transfer of acetyl group from acetyl coenzyme A to glucosamine-1-phosphate (GlcN-1-P) to produce N-acetylglucosamine-1-phosphate (GlcNAc-1-P), which is converted into UDP-GlcNAc by the transfer of uridine 5-monophosphate (from uridine 5-triphosphate), a reaction catalyzed by the N-terminal domain. This is Bifunctional protein GlmU from Corynebacterium glutamicum (strain ATCC 13032 / DSM 20300 / JCM 1318 / BCRC 11384 / CCUG 27702 / LMG 3730 / NBRC 12168 / NCIMB 10025 / NRRL B-2784 / 534).